The following is an 801-amino-acid chain: MKDQLLVPLRRRPWTCQKCLQRLQLPRHQTRRSFETAASPFPRPLDSLPADYARTKTVDDDTLRRVFDSQQFWREFSQQRAAQPKPTGLVQNQYLTSPDGFRTFANVSLQKCQAIVSKVLAASTLEEYRTMARDLDRLSDLLCRVIDLSDFIRVIHPDPQVQEAATQAYALMFEYMNVLNTTTGLNDQLKKAAANPEVTSQWSDEEKIVAQILIKDFSNSAIHMPPHERQRFVNLSNDISQLGSSFVNGAEPAKSHVSVATNNLRGLDPILVQQIKRWNRTAAVPTTGMIPRLALRSVHDENVRREVYLASRTSSKRQLHRLEELLLKRAELAKLSGYESFAHMTLSDKMAKSPEAVSNFLTALVESNRKLVREELSQLQVMKGAPLQPWDHAYYVHQRVLQYSQARRSRELSAVPEFFSLGTVMQGLSRLFDRLYGVRLVPQEPAPGETWNPDVRRLDVVDEAGRHIAVIYCDLFSRPNKHPNPAHFTLRCSREISAEEVAECASLDQSSHPNDGMATAVDPVTQTLRQLPTIALVCDFPEPGTNGGGRPSLLSEHSVRTLFHEMGHAVHSILGQTRLQSISGTRCATDFAELPSVLMEHFATVPSVLALYARHWRTDEPLSEGMIRSMERDRTAHGSIYGAVENEAQILMALVDQAYHSRPADGGRIDSTALYQQVSQQHSSLPEPADATTPPTSWQGFFGHLYGYGATYYSYIFDRAIANKLWVDVFGAGRHAVDRAAGERYKNEVLRWGGGRSGWECVAGALGSANESNADGRLVEGGDQAMREVGRWGLGRDGVSG.

Residues methionine 1–phenylalanine 41 constitute a mitochondrion transit peptide. Residue histidine 564 participates in Zn(2+) binding. The active site involves glutamate 565. The Zn(2+) site is built by histidine 568 and histidine 571.

The protein belongs to the peptidase M3 family. Requires Zn(2+) as cofactor.

The protein resides in the mitochondrion matrix. The catalysed reaction is Release of an N-terminal octapeptide as second stage of processing of some proteins imported into the mitochondrion.. Functionally, cleaves proteins, imported into the mitochondrion, to their mature size. While most mitochondrial precursor proteins are processed to the mature form in one step by mitochondrial processing peptidase (MPP), the sequential cleavage by MIP of an octapeptide after initial processing by MPP is a required step for a subgroup of nuclear-encoded precursor proteins destined for the matrix or the inner membrane. This Aspergillus fumigatus (strain ATCC MYA-4609 / CBS 101355 / FGSC A1100 / Af293) (Neosartorya fumigata) protein is Mitochondrial intermediate peptidase (oct1).